The sequence spans 1063 residues: MATVPVYCICRLPYDVTQFMIECDACKDWFHGSCVGVDEDEAPDIDIYHCPNCEKTHGKSTLKKKKSWNKHDTGQSGDVRPVQNGSQVFIKELRSRTFPSSEDVVVKLSGSQLTLEYLEENGFNEPILIQKKDGLGMAMPAPTFYVSDVENYVGPDVLVDVVDVTKQTDSKMKLKEFVDYYYSTNRKKVLNVINLEFSDARMANIVESPQIVRKLSWVENYWPDDALLGKPKVSKYCLICVKDSYTDFHIECGGASVWYHVLKGEKIFFLIKPTSANLSLYERWRSSSNHSEMFFADQVDKCYKCTLKQGQTLFIPSGWINAILTPVDCLAFSGHFVHSLSVEMQMRAYEVEKRLKVASLTPFSNFETACWYVGKYYLEQFKGLHKANKQPPPYLVHGAKIVNGAFRSWTKKQALLEHEDELPENMKPAQLIKDLAKEIRIAEVKQVVSDSQNATKAIKSEPSNSKPPAEEPPSALSEPEEPMSPAHVSSPSGDKPARKKVPKPPKMPKAPKPPKEPKIKEGGKKKAKKVKEGVIPEKKPSSLAALESHAKDILNKMDQPKKLIKTGMSIMEKETNKPNDVKKFEMIREHNKNKTESKWKYKNSKPDSLLKMEEEHKFDKSLLSHKDNKFAFSLSNKKLLGSKMLKTQTNSSVFGSIQNIKEEKPKPVRDEYEYVSDEGELKIEEFPIRRKKNAVKREFSFLSNIKEPIQPSKKPKLPPSDMKSPDTSDEESLHIDTEAKTDVKGRNSKVSKKKGGSSAGILDLLQASKQVGGIDYSNNSQPPASPSTQEAIQGMLSMANLQSSDSCLQPFWSNSQAKNNSHSSAASKKPSGAAGAGGNSKRPAKRLPKKTQKSSSVDSSDMFDDDQDHLEACFKDSDYVYPSLESEEDNPIFKSRSKKRKNTDDTPYSPTARVGPTVPRQERPAREGARVASIETGLAAAAAKLSHQEEQKIKKKKKSAKKKPIVAEESHKLSHDSSSPEPTPDSESNMADHEYSTGTGKSAGGSQPMAPGVFLSHRRPSSSSSSQNASSVLPAKRLKKGMATAKQRLGKILKIHRNGKLLL.

A PHD-type zinc finger spans residues Pro-5 to Thr-56. The region spanning Phe-197 to Lys-353 is the JmjC domain. Thr-246 is a 2-oxoglutarate binding site. Residues His-249 and Glu-251 each coordinate Fe cation. Positions 259 and 266 each coordinate 2-oxoglutarate. Asn-321 is a Fe cation binding site. Disordered stretches follow at residues Val-448–Leu-546, Asn-704–Ile-761, Gly-773–Asp-864, and Tyr-879–Ala-1045. Positions Ser-460–Ser-477 are enriched in low complexity. Basic and acidic residues-rich tracts occupy residues Pro-513 to Pro-540 and Lys-723 to Gly-745. Residues Arg-746–Gly-755 are compositionally biased toward basic residues. Polar residues predominate over residues Tyr-776–Ala-791. A compositionally biased stretch (low complexity) spans Ser-813 to Ala-833. Basic residues predominate over residues Arg-842 to Gln-852. Basic and acidic residues predominate over residues Arg-920–Ala-929. Residues Ile-953–Pro-964 are compositionally biased toward basic residues. Residues Ile-965–His-975 show a composition bias toward basic and acidic residues. Composition is skewed to low complexity over residues Asp-976–Ser-988 and Ser-1021–Ser-1031. Ser-1021 is modified (phosphoserine; by PKA).

Belongs to the JHDM1 histone demethylase family. JHDM1D subfamily.

The protein resides in the nucleus. It is found in the nucleolus. The protein localises to the chromosome. Its subcellular location is the centromere. It localises to the kinetochore. Its function is as follows. Lysine demethylase that demethylates both histones and non-histone proteins. Mediates demethylation of dimethylated 'Lys-9' of histone H3 (H3K9me2). Recruited to trimethylated 'Lys-4' of histone H3 (H3K4me3) at rDNA promoters and promotes expression of rDNA. This chain is Lysine-specific demethylase phf2 (phf2), found in Danio rerio (Zebrafish).